The following is a 216-amino-acid chain: Flagellin B3 (216 aa).

Residues 1–11 (MLLDYIKSRRG) constitute a propeptide that is removed on maturation.

Belongs to the archaeal flagellin family.

The protein resides in the archaeal flagellum. In terms of biological role, flagellin is the subunit protein which polymerizes to form the filaments of archaeal flagella. The chain is Flagellin B3 (flaB3) from Methanocaldococcus jannaschii (strain ATCC 43067 / DSM 2661 / JAL-1 / JCM 10045 / NBRC 100440) (Methanococcus jannaschii).